Reading from the N-terminus, the 194-residue chain is Ribonuclease HII (194 aa).

The RNase H type-2 domain maps to 3–193 (ILTAGVDEAG…VRNLLAQQTL (191 aa)). Asp-9, Glu-10, and Asp-101 together coordinate a divalent metal cation.

Belongs to the RNase HII family. It depends on Mn(2+) as a cofactor. Mg(2+) is required as a cofactor.

It localises to the cytoplasm. It catalyses the reaction Endonucleolytic cleavage to 5'-phosphomonoester.. Its function is as follows. Endonuclease that specifically degrades the RNA of RNA-DNA hybrids. The protein is Ribonuclease HII of Neisseria meningitidis serogroup C (strain 053442).